The primary structure comprises 476 residues: Viral inhibitor of caspase-8-induced apoptosis (476 aa).

Belongs to the herpesviridae US22 family. Interacts with host pro-caspase-8/CASP8; this interaction inhibits CASP8 activation.

Its function is as follows. Plays a role in the inhibition of apoptosis by interacting with the pro-domain of pro-caspase-8/CASP8 and thus preventing its activation. The chain is Viral inhibitor of caspase-8-induced apoptosis (UL36) from Human cytomegalovirus (strain Merlin) (HHV-5).